The sequence spans 2521 residues: Partially reducing polyketide synthase tpeA (2521 aa).

Positions 7-434 (DQSIAVIGLS…GSNAHAIIDN (428 aa)) constitute a Ketosynthase family 3 (KS3) domain. The interval 47–66 (RWNSRRFQDDKNHSQNTSRT) is disordered. Residues C180, H315, and H357 each act as for beta-ketoacyl synthase activity in the active site. A Malonyl-CoA:ACP transacylase (MAT) domain is found at 554-855 (YVFTGQGAQW…LRGPVTQILQ (302 aa)). The tract at residues 948–1088 (SSFIGLPMPS…GLVTVEFEQL (141 aa)) is N-terminal hotdog fold. In terms of domain architecture, PKS/mFAS DH spans 948-1258 (SSFIGLPMPS…CVEMPSTAGV (311 aa)). The interval 949–1256 (SFIGLPMPSF…LTCVEMPSTA (308 aa)) is dehydratase (DH) domain. The tract at residues 1100-1258 (TTVQQAEAFY…CVEMPSTAGV (159 aa)) is C-terminal hotdog fold. In terms of domain architecture, Enoyl reductase (ER) spans 1809 to 2121 (GMLNTLCFQA…DNRHHGKITL (313 aa)). Residues 2146–2323 (TYLIAGGLGG…AVTIDLGIVK (178 aa)) enclose the Ketoreductase (KR) domain. Residues 2433–2510 (DAVLFVTGAV…SFARDLVGKG (78 aa)) form the Carrier domain. S2470 carries the O-(pantetheine 4'-phosphoryl)serine modification.

Pantetheine 4'-phosphate is required as a cofactor.

Its pathway is secondary metabolite biosynthesis. Its function is as follows. Partially reducing polyketide synthase; part of the gene cluster that mediates the biosynthesis of polyesters containing 2,4-dihydroxy-6-(2-hydroxypropyl)benzoate and 3-hydroxybutyrate moieties, such as talapolyester G, 15G256beta and 15G256beta-2; as well as to oxidized derivatives such as 15G256alpha. The biosynthesis of the polyesters probably starts with the formation of the diketide 3-hydroxybutyryl-S-ACP catalyzed by the partially reducing polyketide synthase tpeA. The acceptance of 3-hydroxybutyryl by the non-reducing polyketide synthase tpeB would initiate further elongation and cyclization, catalyzed by KS and PT, respectively, to form 2,4-dihydroxy-6-(2-hydroxyn-propyl)benzoyl-S-ACP intermediate. The TE domain could catalyze lactonization at this step to yield 6-hydroxymellein as a derailment product. The polyesterification process maybe occurs when additional molecules of 3-hydroxybutyryl are transferred to tpeB. Following the first esterification step, an intramolecular cyclization catalyzed by the TE domain of tpeB would give talarodioxadione 1, whereas the ethyl esterification of talapolyester G perhaps happens spontaneously. Further oxidation by the cytochrome P450 monooxygenase tpeC then leads to the formation of oxidized derivatives. The protein is Partially reducing polyketide synthase tpeA of Talaromyces stipitatus (strain ATCC 10500 / CBS 375.48 / QM 6759 / NRRL 1006) (Penicillium stipitatum).